We begin with the raw amino-acid sequence, 696 residues long: Caprolactamase subunit alpha (696 aa).

It belongs to the HyuA family. In terms of assembly, the caprolactamase is a heterotetramer composed of two alpha subunits (CapA) and two beta subunits (CapB).

Activity is dependent on the presence of ATP and bicarbonate. The requirement for bicarbonate may be related to allosteric activation through conformational effects, but it is also conceivable that carboxyphosphate is formed and acts as a mediator in caprolactam activation, forming carboxy- or phospholactim. Its function is as follows. Component of a caprolactamase involved in the degradation of caprolactam, an industrial compound mainly used in the production of Nylon 6. Catalyzes the ATP-dependent hydrolysis of the caprolactam ring to form 6-aminocaproic acid (6-ACA). The alpha subunit is responsible for ATP-dependent substrate phosphorylation. The enzyme cannot use 5-oxoproline. The chain is Caprolactamase subunit alpha from Pseudomonas jessenii.